A 421-amino-acid chain; its full sequence is Gamma-glutamyl phosphate reductase (421 aa).

It belongs to the gamma-glutamyl phosphate reductase family.

It localises to the cytoplasm. The catalysed reaction is L-glutamate 5-semialdehyde + phosphate + NADP(+) = L-glutamyl 5-phosphate + NADPH + H(+). It participates in amino-acid biosynthesis; L-proline biosynthesis; L-glutamate 5-semialdehyde from L-glutamate: step 2/2. In terms of biological role, catalyzes the NADPH-dependent reduction of L-glutamate 5-phosphate into L-glutamate 5-semialdehyde and phosphate. The product spontaneously undergoes cyclization to form 1-pyrroline-5-carboxylate. This chain is Gamma-glutamyl phosphate reductase, found in Acinetobacter baumannii (strain SDF).